The sequence spans 362 residues: Cobalt-precorrin-5B C(1)-methyltransferase (362 aa).

It belongs to the CbiD family.

It carries out the reaction Co-precorrin-5B + S-adenosyl-L-methionine = Co-precorrin-6A + S-adenosyl-L-homocysteine. It participates in cofactor biosynthesis; adenosylcobalamin biosynthesis; cob(II)yrinate a,c-diamide from sirohydrochlorin (anaerobic route): step 6/10. Catalyzes the methylation of C-1 in cobalt-precorrin-5B to form cobalt-precorrin-6A. This chain is Cobalt-precorrin-5B C(1)-methyltransferase, found in Burkholderia ambifaria (strain MC40-6).